The sequence spans 79 residues: RNA-binding protein Hfq (79 aa).

The region spanning 10-70 (DAFLNHVRKT…ISTIMPAQPI (61 aa)) is the Sm domain.

This sequence belongs to the Hfq family. As to quaternary structure, homohexamer.

Its function is as follows. RNA chaperone that binds small regulatory RNA (sRNAs) and mRNAs to facilitate mRNA translational regulation in response to envelope stress, environmental stress and changes in metabolite concentrations. Also binds with high specificity to tRNAs. This chain is RNA-binding protein Hfq, found in Ruegeria sp. (strain TM1040) (Silicibacter sp.).